The chain runs to 338 residues: Limbic system-associated membrane protein (338 aa).

The signal sequence occupies residues 1-28 (MVARAQPDRKQLPLVLLRLLCLLPTGLP). Ig-like C2-type domains are found at residues 29–122 (VRSV…PKTS), 132–214 (PKIS…VRVT), and 219–306 (PTIT…LYLY). N-linked (GlcNAc...) asparagine glycosylation is found at N40, N66, N136, and N148. C53 and C111 are joined by a disulfide. Disulfide bonds link C153/C197 and C239/C290. N-linked (GlcNAc...) asparagine glycosylation is found at N279, N287, N300, and N315. Residue N315 is the site of GPI-anchor amidated asparagine attachment. Positions 316-338 (GSVSLAVPLWLLAASLLCLLSKC) are cleaved as a propeptide — removed in mature form.

Belongs to the immunoglobulin superfamily. IgLON family.

The protein localises to the cell membrane. Its function is as follows. Mediates selective neuronal growth and axon targeting. Probably serves as a recognition molecule for the formation of limbic connections. This Gallus gallus (Chicken) protein is Limbic system-associated membrane protein.